The sequence spans 172 residues: Shikimate kinase (172 aa).

11–16 (GAGKST) contacts ATP. Residue Ser-15 participates in Mg(2+) binding. The substrate site is built by Asp-33, Arg-57, and Gly-79. Arg-117 is a binding site for ATP. Arg-136 serves as a coordination point for substrate. ATP is bound at residue Arg-153.

The protein belongs to the shikimate kinase family. As to quaternary structure, monomer. The cofactor is Mg(2+).

Its subcellular location is the cytoplasm. It carries out the reaction shikimate + ATP = 3-phosphoshikimate + ADP + H(+). The protein operates within metabolic intermediate biosynthesis; chorismate biosynthesis; chorismate from D-erythrose 4-phosphate and phosphoenolpyruvate: step 5/7. Functionally, catalyzes the specific phosphorylation of the 3-hydroxyl group of shikimic acid using ATP as a cosubstrate. The chain is Shikimate kinase from Pseudomonas paraeruginosa (strain DSM 24068 / PA7) (Pseudomonas aeruginosa (strain PA7)).